Consider the following 289-residue polypeptide: MTTPTLDLAIITGLSGAGRSTAAKCLEDLGWFVVDNLPPELLSTMAELGRRSGGAISRIAVVVDVRGRPFFSDLRAAIAALDARGMHPRMLFLEASDDALIRRFEHVRRPHPLQRDERVVDGIGRERILLAELRGEADLVLDTTDLNVHELRSKIDAAFGQPNANRLNATVVSFGYKYGLPLDADLVADCRFLPNPHWVEALRPFTGRDPQVRDYVLAQPGAQDFLDQYSALLRLVGEGYAREGKRYLTLAVGCTGGKHRSVAIAEQLGIRLAAGGVGVRVVHRDLGRE.

13–20 provides a ligand contact to ATP; the sequence is GLSGAGRS. 64-67 serves as a coordination point for GTP; that stretch reads DVRG.

It belongs to the RapZ-like family.

Displays ATPase and GTPase activities. The chain is Nucleotide-binding protein Francci3_1634 from Frankia casuarinae (strain DSM 45818 / CECT 9043 / HFP020203 / CcI3).